The following is a 239-amino-acid chain: 2,3,4,5-tetrahydropyridine-2,6-dicarboxylate N-acetyltransferase (239 aa).

It belongs to the transferase hexapeptide repeat family. DapH subfamily.

The enzyme catalyses (S)-2,3,4,5-tetrahydrodipicolinate + acetyl-CoA + H2O = L-2-acetamido-6-oxoheptanedioate + CoA. It functions in the pathway amino-acid biosynthesis; L-lysine biosynthesis via DAP pathway; LL-2,6-diaminopimelate from (S)-tetrahydrodipicolinate (acetylase route): step 1/3. Its function is as follows. Catalyzes the transfer of an acetyl group from acetyl-CoA to tetrahydrodipicolinate. The chain is 2,3,4,5-tetrahydropyridine-2,6-dicarboxylate N-acetyltransferase from Staphylococcus aureus (strain Newman).